Here is a 1171-residue protein sequence, read N- to C-terminus: ATP-dependent helicase/deoxyribonuclease subunit B (1171 aa).

Belongs to the helicase family. AddB/RexB type 2 subfamily. As to quaternary structure, heterodimer of AddA and RexB. Mg(2+) is required as a cofactor.

Its function is as follows. The heterodimer acts as both an ATP-dependent DNA helicase and an ATP-dependent, dual-direction single-stranded exonuclease. Recognizes the chi site generating a DNA molecule suitable for the initiation of homologous recombination. This subunit has 5' -&gt; 3' nuclease activity but not helicase activity. The chain is ATP-dependent helicase/deoxyribonuclease subunit B from Leuconostoc citreum (strain KM20).